Reading from the N-terminus, the 340-residue chain is NAD-dependent epimerase/dehydratase terH (340 aa).

A helical transmembrane segment spans residues 7–27 (IVPPGGLVLVTGVTGFIGSYI). The N-linked (GlcNAc...) asparagine glycan is linked to N139. An NADP(+)-binding site is contributed by Y176.

Belongs to the NAD(P)-dependent epimerase/dehydratase family. Dihydroflavonol-4-reductase subfamily.

It localises to the membrane. Its function is as follows. NAD-dependent epimerase/dehydratase; part of the gene cluster that mediates the biosynthesis of terrein, a fungal metabolite with ecological, antimicrobial, antiproliferative, and antioxidative activities. The first step in the pathway is performed by the polyketide synthase terA that produces 4-hydroxy-6-methylpyranon (4-HMP), orsellinic acid (OA), and 2,3-dehydro-6-hydroxymellein (2,3-dehydro-6-HM) by condensing acetyl-CoA with two, three, or four malonyl-CoA units, respectively. 4-HMP and OA are not pathway intermediates, but are rather shunt or side products. 2,3-dehydro-6-HM is further converted to 6-hydroxymellein (6-HM) by the 6-hydroxymellein synthase terB. The monooxygenases terC and terD, the multicopper oxidase terE and the Kelch-like protein terF are then involved in the transformation of 6-HM to terrein. Even if they are co-regulated with the other terrein cluster genes, terH and terI seem to be dispensable for terrein production; whereas one or both of the 2 transporters terG and terJ are probably required for efficient secretion of metabolites. The protein is NAD-dependent epimerase/dehydratase terH of Aspergillus terreus (strain NIH 2624 / FGSC A1156).